We begin with the raw amino-acid sequence, 245 residues long: 6-carboxyhexanoate--CoA ligase (245 aa).

Belongs to the BioW family. In terms of assembly, homodimer. It depends on Mg(2+) as a cofactor.

The catalysed reaction is heptanedioate + ATP + CoA = 6-carboxyhexanoyl-CoA + AMP + diphosphate. It functions in the pathway metabolic intermediate metabolism; pimeloyl-CoA biosynthesis; pimeloyl-CoA from pimelate: step 1/1. In terms of biological role, catalyzes the transformation of pimelate into pimeloyl-CoA with concomitant hydrolysis of ATP to AMP. The chain is 6-carboxyhexanoate--CoA ligase from Thermodesulfovibrio yellowstonii (strain ATCC 51303 / DSM 11347 / YP87).